The sequence spans 475 residues: Bifunctional aspartate aminotransferase and glutamate/aspartate-prephenate aminotransferase (475 aa).

The transit peptide at methionine 1–methionine 55 directs the protein to the chloroplast. Residues glycine 107, tryptophan 193, and asparagine 243 each contribute to the L-aspartate site. Lysine 306 carries the post-translational modification N6-(pyridoxal phosphate)lysine. Arginine 445 contributes to the L-aspartate binding site.

The protein belongs to the class-I pyridoxal-phosphate-dependent aminotransferase family. As to quaternary structure, homodimer. The cofactor is pyridoxal 5'-phosphate.

It localises to the plastid. The protein localises to the chloroplast. The catalysed reaction is L-aspartate + 2-oxoglutarate = oxaloacetate + L-glutamate. The enzyme catalyses L-arogenate + oxaloacetate = prephenate + L-aspartate. It catalyses the reaction L-arogenate + 2-oxoglutarate = prephenate + L-glutamate. The protein operates within amino-acid biosynthesis; L-phenylalanine biosynthesis; L-arogenate from prephenate (L-Asp route): step 1/1. It participates in amino-acid biosynthesis; L-phenylalanine biosynthesis; L-arogenate from prephenate (L-Glu route): step 1/1. Its function is as follows. Prokaryotic-type aspartate aminotransferase. Also has a prenate transaminase activity. Involved in the aromatic amino acids biosynthesis pathway via the arogenate route. Required for the transamination of prephenate into arogenate. Required for early development of the embryo. The chain is Bifunctional aspartate aminotransferase and glutamate/aspartate-prephenate aminotransferase (PAT) from Arabidopsis thaliana (Mouse-ear cress).